The sequence spans 99 residues: Large ribosomal subunit protein uL23 (99 aa).

This sequence belongs to the universal ribosomal protein uL23 family. In terms of assembly, part of the 50S ribosomal subunit. Contacts protein L29, and trigger factor when it is bound to the ribosome.

One of the early assembly proteins it binds 23S rRNA. One of the proteins that surrounds the polypeptide exit tunnel on the outside of the ribosome. Forms the main docking site for trigger factor binding to the ribosome. The protein is Large ribosomal subunit protein uL23 of Rhodopseudomonas palustris (strain BisB18).